We begin with the raw amino-acid sequence, 925 residues long: Coronin-7 (925 aa).

WD repeat units follow at residues 75 to 115 (CHSD…QALP), 124 to 163 (PEDL…PLTE), 166 to 205 (AHGD…RASQ), and 209 to 253 (AHEN…SALA). A disordered region spans residues 419 to 461 (VGDADASEGFSSPPSSLTSPSTPSSLGPSLSSTSGIGTSPSLR). Low complexity predominate over residues 429 to 460 (SSPPSSLTSPSTPSSLGPSLSSTSGIGTSPSL). Serine 462 and serine 465 each carry phosphoserine. A Glycyl lysine isopeptide (Lys-Gly) (interchain with G-Cter in ubiquitin) cross-link involves residue lysine 472. 3 WD repeats span residues 542-582 (QNGA…LEEV), 592-632 (GHTE…DRLK), and 635-674 (GHQD…EPLQ). Lysine 680 participates in a covalent cross-link: Glycyl lysine isopeptide (Lys-Gly) (interchain with G-Cter in ubiquitin). One copy of the WD 8 repeat lies at 728–768 (DVAPSTLLPSYDPDTGLVLLTGKGDTRVFLYELLPESPFFL). The tract at residues 858–925 (QPPDMSPVSQ…FEGVDEDEWD (68 aa)) is disordered. Residues 866 to 882 (SQAPREAPARRAPSSAQ) show a composition bias toward low complexity. Positions 884-896 (LEEKSDQQKKEEL) are enriched in basic and acidic residues. At serine 915 the chain carries Phosphoserine.

This sequence belongs to the WD repeat coronin family. As to quaternary structure, interacts with clathrin adapter AP1 complex. This interaction takes place at Golgi membranes and not AP1-positive endosomal membranes. Interacts (when ubiquitinated at Lys-472) with EPS15. Post-translationally, the membrane-associated form is phosphorylated on tyrosine residues. Ubiquitinated via 'Lys-33'-linked ubiquitin chains by the BCR(KLHL20) E3 ubiquitin ligase complex: 'Lys-33'-linked ubiquitination promotes interaction with EPS15 and facilitates actin polymerization at the trans-Golgi network, thereby facilitating post-Golgi trafficking. Deubiquitinated by ZRANB1/TRABID. As to expression, widely expressed. Expressed in the spleen, peripheral leukocytes, testes, brain, thymus and small intestine.

Its subcellular location is the golgi apparatus membrane. The protein resides in the golgi apparatus. It is found in the trans-Golgi network. The protein localises to the cytoplasmic vesicle. It localises to the cytoplasm. Its subcellular location is the cytosol. Its function is as follows. F-actin regulator involved in anterograde Golgi to endosome transport: upon ubiquitination via 'Lys-33'-linked ubiquitin chains by the BCR(KLHL20) E3 ubiquitin ligase complex, interacts with EPS15 and localizes to the trans-Golgi network, where it promotes actin polymerization, thereby facilitating post-Golgi trafficking. May play a role in the maintenance of the Golgi apparatus morphology. The protein is Coronin-7 (CORO7) of Homo sapiens (Human).